The chain runs to 446 residues: Exodeoxyribonuclease 7 large subunit (446 aa).

It belongs to the XseA family. As to quaternary structure, heterooligomer composed of large and small subunits.

The protein localises to the cytoplasm. The enzyme catalyses Exonucleolytic cleavage in either 5'- to 3'- or 3'- to 5'-direction to yield nucleoside 5'-phosphates.. Its function is as follows. Bidirectionally degrades single-stranded DNA into large acid-insoluble oligonucleotides, which are then degraded further into small acid-soluble oligonucleotides. The chain is Exodeoxyribonuclease 7 large subunit from Ligilactobacillus salivarius (strain UCC118) (Lactobacillus salivarius).